The chain runs to 88 residues: Small ribosomal subunit protein uS19 (88 aa).

This sequence belongs to the universal ribosomal protein uS19 family.

Functionally, protein S19 forms a complex with S13 that binds strongly to the 16S ribosomal RNA. The chain is Small ribosomal subunit protein uS19 (rpsS) from Mycoplasma capricolum subsp. capricolum (strain California kid / ATCC 27343 / NCTC 10154).